Reading from the N-terminus, the 305-residue chain is Homoserine O-acetyltransferase (305 aa).

Catalysis depends on cysteine 142, which acts as the Acyl-thioester intermediate. Substrate-binding residues include lysine 163 and serine 192. Catalysis depends on histidine 235, which acts as the Proton acceptor. The active site involves glutamate 237. Arginine 249 is a substrate binding site.

Belongs to the MetA family.

It is found in the cytoplasm. It catalyses the reaction L-homoserine + acetyl-CoA = O-acetyl-L-homoserine + CoA. It functions in the pathway amino-acid biosynthesis; L-methionine biosynthesis via de novo pathway; O-acetyl-L-homoserine from L-homoserine: step 1/1. Transfers an acetyl group from acetyl-CoA to L-homoserine, forming acetyl-L-homoserine. In Hyphomonas neptunium (strain ATCC 15444), this protein is Homoserine O-acetyltransferase.